The primary structure comprises 344 residues: Outer membrane protein B (344 aa).

An N-terminal signal peptide occupies residues 1-30 (MNSKMLKHLRLATLSFSMFFGIVSSPAVYA).

The protein belongs to the chlamydial OMP family.

The protein resides in the cell outer membrane. The chain is Outer membrane protein B (ompB) from Chlamydia pneumoniae (Chlamydophila pneumoniae).